A 331-amino-acid chain; its full sequence is Glucokinase (331 aa).

16–21 contributes to the ATP binding site; sequence GDIGGT.

The protein belongs to the bacterial glucokinase family.

It localises to the cytoplasm. It carries out the reaction D-glucose + ATP = D-glucose 6-phosphate + ADP + H(+). In Pseudomonas aeruginosa (strain LESB58), this protein is Glucokinase.